Consider the following 351-residue polypeptide: Ion-translocating oxidoreductase complex subunit D (351 aa).

A run of 4 helical transmembrane segments spans residues Ile-20–Gly-40, Leu-44–Leu-64, Leu-89–Ala-109, and Pro-123–Leu-143. FMN phosphoryl threonine is present on Thr-187. The next 5 helical transmembrane spans lie at Leu-215–Leu-235, Ile-244–Pro-264, Phe-267–Ala-287, Leu-301–Pro-321, and Asp-322–Thr-342.

The protein belongs to the NqrB/RnfD family. The complex is composed of six subunits: RnfA, RnfB, RnfC, RnfD, RnfE and RnfG. FMN serves as cofactor.

It localises to the cell inner membrane. Its function is as follows. Part of a membrane-bound complex that couples electron transfer with translocation of ions across the membrane. The sequence is that of Ion-translocating oxidoreductase complex subunit D from Pectobacterium atrosepticum (strain SCRI 1043 / ATCC BAA-672) (Erwinia carotovora subsp. atroseptica).